Consider the following 373-residue polypeptide: 3-dehydroquinate synthase (373 aa).

NAD(+) is bound by residues 67 to 72, 101 to 105, 125 to 126, Lys-138, and Lys-147; these read EGEQAK, GVVLD, and TT. Positions 180, 240, and 256 each coordinate Zn(2+).

Belongs to the sugar phosphate cyclases superfamily. Dehydroquinate synthase family. NAD(+) is required as a cofactor. It depends on Co(2+) as a cofactor. Requires Zn(2+) as cofactor.

The protein localises to the cytoplasm. It catalyses the reaction 7-phospho-2-dehydro-3-deoxy-D-arabino-heptonate = 3-dehydroquinate + phosphate. It participates in metabolic intermediate biosynthesis; chorismate biosynthesis; chorismate from D-erythrose 4-phosphate and phosphoenolpyruvate: step 2/7. Functionally, catalyzes the conversion of 3-deoxy-D-arabino-heptulosonate 7-phosphate (DAHP) to dehydroquinate (DHQ). In Chlamydia muridarum (strain MoPn / Nigg), this protein is 3-dehydroquinate synthase (aroB).